A 507-amino-acid chain; its full sequence is Cytochrome c-type protein ImcH (507 aa).

The next 3 helical transmembrane spans lie at 14 to 34 (ISLI…AFIA), 45 to 65 (YIGL…LILV), and 100 to 120 (LFIF…VASI). Positions 132, 136, 140, 152, 157, 160, 161, 400, 449, 452, 453, 487, 490, 491, and 496 each coordinate heme.

It belongs to the NapC/NirT/NrfH family. In terms of processing, binds 4 heme c groups covalently per subunit.

The protein resides in the cell inner membrane. In terms of biological role, redox protein involved in a high-potential metal respiratory pathway. Is required only for electron transfer to terminal extracellular electron acceptors with redox potentials higher than -0.1 V. ImcH likely transfers electrons from the quinone pool to a periplasmic acceptor. This is Cytochrome c-type protein ImcH from Geobacter sulfurreducens (strain ATCC 51573 / DSM 12127 / PCA).